Reading from the N-terminus, the 78-residue chain is Small ribosomal subunit protein bS16c (78 aa).

It belongs to the bacterial ribosomal protein bS16 family.

It localises to the plastid. Its subcellular location is the chloroplast. This chain is Small ribosomal subunit protein bS16c, found in Panax ginseng (Korean ginseng).